Reading from the N-terminus, the 291-residue chain is Nucleotide-binding protein CMM_1747 (291 aa).

15–22 is a binding site for ATP; sequence GMSGAGRS. 66 to 69 contacts GTP; sequence DVRG.

This sequence belongs to the RapZ-like family.

Its function is as follows. Displays ATPase and GTPase activities. This Clavibacter michiganensis subsp. michiganensis (strain NCPPB 382) protein is Nucleotide-binding protein CMM_1747.